The primary structure comprises 292 residues: Elongation factor Ts (292 aa).

The involved in Mg(2+) ion dislocation from EF-Tu stretch occupies residues 80-83; it reads TDFV.

The protein belongs to the EF-Ts family.

It localises to the cytoplasm. Functionally, associates with the EF-Tu.GDP complex and induces the exchange of GDP to GTP. It remains bound to the aminoacyl-tRNA.EF-Tu.GTP complex up to the GTP hydrolysis stage on the ribosome. In Cupriavidus pinatubonensis (strain JMP 134 / LMG 1197) (Cupriavidus necator (strain JMP 134)), this protein is Elongation factor Ts.